Consider the following 406-residue polypeptide: telomere-associated protein 1 (406 aa).

The span at Glu20 to Asn40 shows a compositional bias: basic and acidic residues. The segment at Glu20–Ala46 is disordered. The 60-residue stretch at Thr147 to Tyr206 folds into the HTH myb-type domain. Positions Trp175–Phe202 form a DNA-binding region, H-T-H motif. Residues Val234 to Phe288 enclose the Myb-like domain. The segment at Thr368–Glu389 is disordered.

The protein localises to the nucleus. The protein resides in the chromosome. It localises to the telomere. Functionally, telomere-binding protein that mediates telomere clustering by promoting formation of head-to-head dimers of DNA molecules through the telomeric tracts. Binds specifically 5'-TTAGTCAGGG-3' repeats in subtelomeric regions. The chain is telomere-associated protein 1 from Yarrowia lipolytica (strain CLIB 122 / E 150) (Yeast).